A 175-amino-acid polypeptide reads, in one-letter code: Rubredoxin-1 (175 aa).

2 Rubredoxin-like domains span residues 1–53 and 119–170; these read MARY…FVLI and FLKW…YVLY. The Fe cation site is built by Cys-6, Cys-9, Cys-39, Cys-42, Cys-124, Cys-127, Cys-157, and Cys-160.

This sequence belongs to the rubredoxin family. The cofactor is Fe(3+).

Its subcellular location is the cytoplasm. The protein operates within hydrocarbon metabolism; alkane degradation. Functionally, involved in the hydrocarbon hydroxylating system, which transfers electrons from NADH to rubredoxin reductase and then through rubredoxin to alkane 1 monooxygenase. The protein is Rubredoxin-1 (alkG) of Pseudomonas putida (Arthrobacter siderocapsulatus).